The primary structure comprises 85 residues: UPF0386 protein VF_0869 (85 aa).

It belongs to the UPF0386 family.

The sequence is that of UPF0386 protein VF_0869 from Aliivibrio fischeri (strain ATCC 700601 / ES114) (Vibrio fischeri).